Reading from the N-terminus, the 429-residue chain is Histidinol dehydrogenase (429 aa).

NAD(+) is bound by residues Y127, Q188, and N211. S234, Q256, and H259 together coordinate substrate. Zn(2+) is bound by residues Q256 and H259. Catalysis depends on proton acceptor residues E324 and H325. The substrate site is built by H325, D358, E412, and H417. Zn(2+) is bound at residue D358. H417 is a binding site for Zn(2+).

This sequence belongs to the histidinol dehydrogenase family. Zn(2+) serves as cofactor.

It catalyses the reaction L-histidinol + 2 NAD(+) + H2O = L-histidine + 2 NADH + 3 H(+). The protein operates within amino-acid biosynthesis; L-histidine biosynthesis; L-histidine from 5-phospho-alpha-D-ribose 1-diphosphate: step 9/9. Catalyzes the sequential NAD-dependent oxidations of L-histidinol to L-histidinaldehyde and then to L-histidine. This is Histidinol dehydrogenase from Bacillus cereus (strain ATCC 10987 / NRS 248).